Here is a 447-residue protein sequence, read N- to C-terminus: Kynurenine 3-monooxygenase (447 aa).

This sequence belongs to the aromatic-ring hydroxylase family. KMO subfamily. Requires FAD as cofactor.

The catalysed reaction is L-kynurenine + NADPH + O2 + H(+) = 3-hydroxy-L-kynurenine + NADP(+) + H2O. It participates in cofactor biosynthesis; NAD(+) biosynthesis; quinolinate from L-kynurenine: step 1/3. Functionally, catalyzes the hydroxylation of L-kynurenine (L-Kyn) to form 3-hydroxy-L-kynurenine (L-3OHKyn). Required for synthesis of quinolinic acid. The chain is Kynurenine 3-monooxygenase from Christiangramia forsetii (strain DSM 17595 / CGMCC 1.15422 / KT0803) (Gramella forsetii).